The chain runs to 269 residues: uncharacterized protein (269 aa).

The 46-residue stretch at 152–197 folds into the RPE1 insert domain; sequence RYFSKPAYRNAFKANTIRATTAYKKVFNDPSLGSTYPLEVPLGKMS.

This is an uncharacterized protein from Rickettsia prowazekii (strain Madrid E).